Here is a 334-residue protein sequence, read N- to C-terminus: Antho-RFamide neuropeptides (334 aa).

An N-terminal signal peptide occupies residues 1–26 (MLVAMTTASYVTILVTLLFHILTINA). The propeptide occupies 27–116 (KTVTKRAKET…REFQGRFGRE (90 aa)). Composition is skewed to basic and acidic residues over residues 115–289 (REQG…RELL) and 303–334 (PQTR…ANKS). The interval 115 to 334 (REQGRFGREE…ESNDEEANKS (220 aa)) is disordered. At phenylalanine 120 the chain carries Phenylalanine amide. Positions 122–125 (REED) are excised as a propeptide. Phenylalanine 129 bears the Phenylalanine amide mark. The propeptide occupies 131 to 134 (REED). Residue phenylalanine 138 is modified to Phenylalanine amide. Positions 140–142 (REE) are excised as a propeptide. Phenylalanine 146 carries the phenylalanine amide modification. A propeptide spanning residues 148 to 151 (REED) is cleaved from the precursor. Phenylalanine 155 is subject to Phenylalanine amide. Positions 157–160 (REED) are excised as a propeptide. At phenylalanine 164 the chain carries Phenylalanine amide. A propeptide spanning residues 166 to 169 (REED) is cleaved from the precursor. Phenylalanine 173 bears the Phenylalanine amide mark. Positions 175-178 (REEE) are excised as a propeptide. The residue at position 182 (phenylalanine 182) is a Phenylalanine amide. Residues 184-187 (REED) constitute a propeptide that is removed on maturation. Phenylalanine amide is present on phenylalanine 191. Positions 193-196 (REEE) are excised as a propeptide. The residue at position 200 (phenylalanine 200) is a Phenylalanine amide. Residues 202 to 205 (REED) constitute a propeptide that is removed on maturation. At phenylalanine 209 the chain carries Phenylalanine amide. Positions 211–214 (REED) are excised as a propeptide. Phenylalanine 218 bears the Phenylalanine amide mark. A propeptide spanning residues 220 to 223 (REEE) is cleaved from the precursor. Phenylalanine 227 carries the post-translational modification Phenylalanine amide. The propeptide occupies 229 to 233 (KRDED). Phenylalanine 237 is modified (phenylalanine amide). A propeptide spanning residues 239–242 (KRED) is cleaved from the precursor. A Phenylalanine amide modification is found at phenylalanine 246. The propeptide occupies 248–252 (KRDED). Phenylalanine 256 is modified (phenylalanine amide). The propeptide occupies 258-262 (KRDED). Phenylalanine 266 bears the Phenylalanine amide mark. Positions 268 to 271 (KRED) are excised as a propeptide. Phenylalanine 275 carries the phenylalanine amide modification. Residues 277–280 (KRED) constitute a propeptide that is removed on maturation. Phenylalanine 284 carries the phenylalanine amide modification. A propeptide spanning residues 286 to 334 (RELLAKLNKRTTSIQEDPQTRFRDVQMTRRNVAKKDKIEESNDEEANKS) is cleaved from the precursor.

Belongs to the FARP (FMRFamide related peptide) family. In terms of tissue distribution, neurons associated with smooth muscle fibers.

It is found in the secreted. Its function is as follows. Not known but it could act as a transmitter at neuromuscular synapses. This Calliactis parasitica (Sea anemone) protein is Antho-RFamide neuropeptides.